A 175-amino-acid chain; its full sequence is Shikimate kinase (175 aa).

14–19 serves as a coordination point for ATP; it reads GAGKST. A Mg(2+)-binding site is contributed by Ser-18. Residues Asp-36, Arg-60, and Gly-82 each contribute to the substrate site. Arg-120 lines the ATP pocket. Arg-140 serves as a coordination point for substrate. Gln-157 contacts ATP.

Belongs to the shikimate kinase family. Monomer. Requires Mg(2+) as cofactor.

Its subcellular location is the cytoplasm. It carries out the reaction shikimate + ATP = 3-phosphoshikimate + ADP + H(+). Its pathway is metabolic intermediate biosynthesis; chorismate biosynthesis; chorismate from D-erythrose 4-phosphate and phosphoenolpyruvate: step 5/7. Catalyzes the specific phosphorylation of the 3-hydroxyl group of shikimic acid using ATP as a cosubstrate. The protein is Shikimate kinase of Pasteurella multocida (strain Pm70).